We begin with the raw amino-acid sequence, 723 residues long: Delta-like protein 1 (723 aa).

The N-terminal stretch at 1–17 (MGSRCALALAVLSALLC) is a signal peptide. At 18 to 545 (QVWSSGVFEL…LEGQGGPFPW (528 aa)) the chain is on the extracellular side. Residues 177–221 (FVCDEHYYGEGCSVFCRPRDDAFGHFTCGERGEKVCNPGWKGPYC) form the DSL domain. 27 disulfides stabilise this stretch: C179–C188, C192–C204, C212–C221, C226–C237, C230–C243, C245–C254, C257–C268, C263–C274, C276–C285, C292–C304, C298–C314, C316–C325, C332–C343, C337–C352, C354–C363, C370–C381, C375–C391, C393–C402, C409–C420, C414–C429, C431–C440, C447–C458, C452–C467, C469–C478, C485–C496, C490–C505, and C507–C516. 3 EGF-like domains span residues 226–254 (CLPGCDEQHGFCDKPGECKCRVGWQGRYC), 257–285 (CIRYPGCLHGTCQQPWQCNCQEGWGGLFC), and 292–325 (CTHHKPCKNGATCTNTGQGSYTCSCRPGYTGATC). Positions 332-363 (CDPSPCKNGGSCTDLENSYSCTCPPGFYGKIC) constitute an EGF-like 4; calcium-binding domain. EGF-like domains lie at 370–402 (CADGPCFNGGRCSDSPDGGYSCRCPVGYSGFNC) and 409–440 (CSSSPCSNGAKCVDLGDAYLCRCQAGFSGRHC). One can recognise an EGF-like 7; calcium-binding domain in the interval 447-478 (CASSPCANGGTCRDGVNDFSCTCPPGYTGRNC). The N-linked (GlcNAc...) asparagine glycan is linked to N477. Positions 485–516 (CEHAPCHNGATCHERGHRYVCECARGYGGPNC) constitute an EGF-like 8 domain. A helical membrane pass occupies residues 546-568 (VAVCAGVILVLMLLLGCAAVVVC). Residues 569–723 (VRLRLQKHRP…KDECVIATEV (155 aa)) lie on the Cytoplasmic side of the membrane. K613 is covalently cross-linked (Glycyl lysine isopeptide (Lys-Gly) (interchain with G-Cter in ubiquitin)). Residues 653–664 (AVRDAHSKRDTK) are compositionally biased toward basic and acidic residues. A disordered region spans residues 653 to 702 (AVRDAHSKRDTKCQPQGSSGEEKGTPTTLRGGEASERKRPDSGCSTSKDT). S694 carries the phosphoserine; by PKB modification. Residue S697 is modified to Phosphoserine. The segment at 720–723 (ATEV) is interaction with MAGI1.

In terms of assembly, homodimer. Interacts with TJP1. Interacts with MAGI1 (via PDZ domain); forms a complex with CTNNB1 and CDH2 and promotes recruitment to the adherens junction and stabilization on the cell surface. Interacts with PSEN1; undergoes a presenilin-dependent gamma-secretase cleavage that releases a Dll1-intracellular form. Interacts with MFAP5. Interacts with MIB1. Interacts with NEURL1B; leads to ubiquitination. Interacts with NEURL1. Interacts with SYNJ2BP; enhances DLL1 protein stability, and promotes Notch signaling in endothelial cells. Interacts with MAGI1, MAGI2, MAGI3 and MPDZ. Interacts (via ubiquitin) with EPN1 (via IUM domain); binding with NOTCH1 attached to neighboring cell, promotes ligand ubiquitination and EPN1 interaction, leading to NECD transendocytosis and Notch signaling. Interacts with NOTCH1. Interacts with NOTCH2NLB; leading to promote Notch signaling pathway in a cell-autonomous manner through inhibition of cis DLL1-NOTCH2 interactions. In terms of processing, ubiquitinated by MIB (MIB1 or MIB2), leading to its endocytosis and subsequent degradation. Ubiquitinated; promotes recycling back to the plasma membrane and confers a strong affinity for NOTCH1. Multi-ubiquitination of Lys-613 by MIB1 promotes both cis and trans-interaction with NOTCH1, as well as activation of Notch signaling. Ubiquitinated by NEURL1B. Phosphorylated in a membrane association-dependent manner. Phosphorylation at Ser-697 requires the presence of Ser-694, whereas phosphorylation at Ser-694 occurs independently of the other site. Phosphorylation is required for full ligand activity in vitro and affects surface presentation, ectodomain shedding, and endocytosis. Post-translationally, O-fucosylated. Can be elongated to a disaccharide by MFNG. Expressed in heart and pancreas, with lower expression in brain and muscle and almost no expression in placenta, lung, liver and kidney.

The protein localises to the apical cell membrane. It is found in the cell junction. Its subcellular location is the adherens junction. It localises to the membrane raft. Functionally, transmembrane ligand protein of NOTCH1, NOTCH2 and NOTCH3 receptors that binds the extracellular domain (ECD) of Notch receptor in a cis and trans fashion manner. Following transinteraction, ligand cells produce mechanical force that depends of a clathrin-mediated endocytosis, requiring ligand ubiquitination, EPN1 interaction, and actin polymerisation; these events promote Notch receptor extracellular domain (NECD) transendocytosis and triggers Notch signaling through induction of cleavage, hyperphosphorylation, and nuclear accumulation of the intracellular domain of Notch receptors (NICD). Is required for embryonic development and maintenance of adult stem cells in many different tissues and immune systeme; the DLL1-induced Notch signaling is mediated through an intercellular communication that regulates cell lineage, cell specification, cell patterning and morphogenesis through effects on differentiation and proliferation. Plays a role in brain development at different level, namely by regulating neuronal differentiation of neural precursor cells via cell-cell interaction, most likely through the lateral inhibitory system in an endogenous level dependent-manner. During neocortex development, Dll1-Notch signaling transmission is mediated by dynamic interactions between intermediate neurogenic progenitors and radial glia; the cell-cell interactions are mediated via dynamic and transient elongation processes, likely to reactivate/maintain Notch activity in neighboring progenitors, and coordinate progenitor cell division and differentiation across radial and zonal boundaries. During cerebellar development, regulates Bergmann glial monolayer formation and its morphological maturation through a Notch signaling pathway. At the retina and spinal cord level, regulates neurogenesis by preventing the premature differentiation of neural progenitors and also by maintaining progenitors in spinal cord through Notch signaling pathway. Also controls neurogenesis of the neural tube in a progenitor domain-specific fashion along the dorsoventral axis. Maintains quiescence of neural stem cells and plays a role as a fate determinant that segregates asymmetrically to one daughter cell during neural stem cells mitosis, resulting in neuronal differentiation in Dll1-inheriting cell. Plays a role in immune systeme development, namely the development of all T-cells and marginal zone (MZ) B-cells. Blocks the differentiation of progenitor cells into the B-cell lineage while promoting the emergence of a population of cells with the characteristics of a T-cell/NK-cell precursor. Also plays a role during muscle development. During early development, inhibits myoblasts differentiation from the medial dermomyotomal lip and later regulates progenitor cell differentiation. Directly modulates cell adhesion and basal lamina formation in satellite cells through Notch signaling. Maintains myogenic progenitors pool by suppressing differentiation through down-regulation of MYOD1 and is required for satellite cell homing and PAX7 expression. During craniofacial and trunk myogenesis suppresses differentiation of cranial mesoderm-derived and somite-derived muscle via MYOD1 regulation but in cranial mesoderm-derived progenitors, is neither required for satellite cell homing nor for PAX7 expression. Also plays a role during pancreatic cell development. During type B pancreatic cell development, may be involved in the initiation of proximodistal patterning in the early pancreatic epithelium. Stimulates multipotent pancreatic progenitor cells proliferation and pancreatic growth by maintaining HES1 expression and PTF1A protein levels. During fetal stages of development, is required to maintain arterial identity and the responsiveness of arterial endothelial cells for VEGFA through regulation of KDR activation and NRP1 expression. Controls sprouting angiogenesis and subsequent vertical branch formation through regulation on tip cell differentiation. Negatively regulates goblet cell differentiation in intestine and controls secretory fat commitment through lateral inhibition in small intestine. Plays a role during inner ear development; negatively regulates auditory hair cell differentiation. Plays a role during nephron development through Notch signaling pathway. Regulates growth, blood pressure and energy homeostasis. The polypeptide is Delta-like protein 1 (Homo sapiens (Human)).